The primary structure comprises 239 residues: Small ribosomal subunit protein uS3 (239 aa).

Residues 39–107 (VREFLRKKLA…ATSINIEEIR (69 aa)) enclose the KH type-2 domain. The interval 215–239 (TSNTNELSDEKRNRRKPRNANRRKE) is disordered. Residues 227 to 239 (NRRKPRNANRRKE) show a composition bias toward basic residues.

It belongs to the universal ribosomal protein uS3 family. Part of the 30S ribosomal subunit. Forms a tight complex with proteins S10 and S14.

Functionally, binds the lower part of the 30S subunit head. Binds mRNA in the 70S ribosome, positioning it for translation. This is Small ribosomal subunit protein uS3 from Dichelobacter nodosus (strain VCS1703A).